Here is a 528-residue protein sequence, read N- to C-terminus: Probable rhamnogalacturonate lyase A (528 aa).

Residues 1–20 form the signal peptide; the sequence is MLSKATLLLSLPFWARVANA. Asparagine 46 is a glycosylation site (N-linked (GlcNAc...) asparagine). Intrachain disulfides connect cysteine 50–cysteine 93 and cysteine 184–cysteine 193. A glycan (N-linked (GlcNAc...) asparagine) is linked at asparagine 351.

Belongs to the polysaccharide lyase 4 family.

Its subcellular location is the secreted. The enzyme catalyses Endotype eliminative cleavage of L-alpha-rhamnopyranosyl-(1-&gt;4)-alpha-D-galactopyranosyluronic acid bonds of rhamnogalacturonan I domains in ramified hairy regions of pectin leaving L-rhamnopyranose at the reducing end and 4-deoxy-4,5-unsaturated D-galactopyranosyluronic acid at the non-reducing end.. Functionally, pectinolytic enzymes consist of four classes of enzymes: pectin lyase, polygalacturonase, pectin methylesterase and rhamnogalacturonase. Degrades the rhamnogalacturonan I (RG-I) backbone of pectin. The chain is Probable rhamnogalacturonate lyase A (rglA) from Neosartorya fischeri (strain ATCC 1020 / DSM 3700 / CBS 544.65 / FGSC A1164 / JCM 1740 / NRRL 181 / WB 181) (Aspergillus fischerianus).